We begin with the raw amino-acid sequence, 489 residues long: Acetyl-coenzyme A carboxylase carboxyl transferase subunit beta, chloroplastic (489 aa).

Residues 222–489 (LWVQCENCYG…FFPLNSNSIK (268 aa)) enclose the CoA carboxyltransferase N-terminal domain. 4 residues coordinate Zn(2+): C226, C229, C245, and C248. Residues 226-248 (CENCYGLNYKKFFRSKMNICEQC) form a C4-type zinc finger.

Belongs to the AccD/PCCB family. In terms of assembly, acetyl-CoA carboxylase is a heterohexamer composed of biotin carboxyl carrier protein, biotin carboxylase and 2 subunits each of ACCase subunit alpha and ACCase plastid-coded subunit beta (accD). Zn(2+) is required as a cofactor.

Its subcellular location is the plastid. It localises to the chloroplast stroma. It catalyses the reaction N(6)-carboxybiotinyl-L-lysyl-[protein] + acetyl-CoA = N(6)-biotinyl-L-lysyl-[protein] + malonyl-CoA. It functions in the pathway lipid metabolism; malonyl-CoA biosynthesis; malonyl-CoA from acetyl-CoA: step 1/1. Its function is as follows. Component of the acetyl coenzyme A carboxylase (ACC) complex. Biotin carboxylase (BC) catalyzes the carboxylation of biotin on its carrier protein (BCCP) and then the CO(2) group is transferred by the transcarboxylase to acetyl-CoA to form malonyl-CoA. The polypeptide is Acetyl-coenzyme A carboxylase carboxyl transferase subunit beta, chloroplastic (Buxus microphylla (Littleleaf boxwood)).